We begin with the raw amino-acid sequence, 449 residues long: C4-dicarboxylate transport protein (449 aa).

The interval Met-1–Ala-20 is disordered. Residues Pro-10–Ala-20 show a composition bias toward low complexity. The next 8 membrane-spanning stretches (helical) occupy residues Leu-28–Pro-48, Leu-66–Ile-86, Leu-101–Val-121, Gly-167–Gly-187, Phe-205–Phe-225, Leu-241–Ala-261, Ile-326–Thr-346, and Phe-370–Ile-390.

The protein belongs to the dicarboxylate/amino acid:cation symporter (DAACS) (TC 2.A.23) family.

It localises to the cell inner membrane. In terms of biological role, responsible for the transport of dicarboxylates such as succinate, fumarate, and malate from the periplasm across the membrane. This is C4-dicarboxylate transport protein from Rhodopseudomonas palustris (strain BisB18).